The sequence spans 339 residues: Undecaprenyl-phosphate 4-deoxy-4-formamido-L-arabinose transferase (339 aa).

The next 2 membrane-spanning stretches (helical) occupy residues 235–255 (LSII…MLIV) and 270–290 (FVLF…MGLL).

This sequence belongs to the glycosyltransferase 2 family.

Its subcellular location is the cell inner membrane. It carries out the reaction UDP-4-deoxy-4-formamido-beta-L-arabinose + di-trans,octa-cis-undecaprenyl phosphate = 4-deoxy-4-formamido-alpha-L-arabinopyranosyl di-trans,octa-cis-undecaprenyl phosphate + UDP. It functions in the pathway glycolipid biosynthesis; 4-amino-4-deoxy-alpha-L-arabinose undecaprenyl phosphate biosynthesis; 4-amino-4-deoxy-alpha-L-arabinose undecaprenyl phosphate from UDP-4-deoxy-4-formamido-beta-L-arabinose and undecaprenyl phosphate: step 1/2. The protein operates within bacterial outer membrane biogenesis; lipopolysaccharide biosynthesis. In terms of biological role, catalyzes the transfer of 4-deoxy-4-formamido-L-arabinose from UDP to undecaprenyl phosphate. The modified arabinose is attached to lipid A and is required for resistance to polymyxin and cationic antimicrobial peptides. The polypeptide is Undecaprenyl-phosphate 4-deoxy-4-formamido-L-arabinose transferase (Pseudomonas fluorescens (strain ATCC BAA-477 / NRRL B-23932 / Pf-5)).